Reading from the N-terminus, the 237-residue chain is Sugar fermentation stimulation protein homolog (237 aa).

Belongs to the SfsA family.

The sequence is that of Sugar fermentation stimulation protein homolog from Actinobacillus pleuropneumoniae serotype 3 (strain JL03).